Consider the following 113-residue polypeptide: Protein translation factor SUI1 homolog 1 (113 aa).

The interval 1–24 (MSELDSQVPTAFDPFADANAEDSG) is disordered. Residue Ser2 is modified to N-acetylserine.

It belongs to the SUI1 family.

Probably involved in translation. This chain is Protein translation factor SUI1 homolog 1, found in Arabidopsis thaliana (Mouse-ear cress).